The primary structure comprises 597 residues: MHRYRSHNCAALRKHDVGKHVRLSGWVHRVRDHGGILFVDLRDHFGITQIVANPASPAFEIIEKVRSEWVIRVDGEVCARSDEVINTVLPTGEIEIFVKEVEILSKSDELPLPVFGEPDYPEDIRLKYRFLDLRRETMHKNIMRRTEIITAIRRSMQNNGFTEFTTPLLTASSPEGARDFLVPSRIHQGKFYALPQAPQQYKQLLMMSGFDRYFQIAPCFRDEDPRADRLPGEFYQLDVEMSFVEQEDVFVTMEPIMRSIFEEFANGKPVTQNFPRISYDEAIKKYGSDKPDLRNPIIMQDVSQHFYDSCFKIFAQILTNDENAQVWAIPAKTGGSRAFCDRMNLWAQSEGQPGLGYIFWREEEGKFEGAGPIAKNIGEQRTEALRIQLGLESGDACFFIAGNPKKFSTFAGAVRTRIGEELDLIDRECFSLAWIVDFPFFEWNEDEKKLDFAHNPFSMPQGGKNALECQDPLTLKAFQYDLVCNGYEIASGGIRNHSPEMMLKVFNLAGLSREVVEDRFGALYRAFHYGAPPHGGMAAGVDRIIMLLQGVKNLREIALFPMNQQALDLLMSAPSDVSSAQLRDLGIRVAPAAKNGS.

Residue Glu-175 participates in L-aspartate binding. The aspartate stretch occupies residues 199–202 (QQYK). L-aspartate is bound by residues Arg-221 and His-454. 221–223 (RDE) contributes to the ATP binding site. ATP is bound at residue Glu-488. Residue Arg-495 participates in L-aspartate binding. 540-543 (GVDR) is a binding site for ATP.

This sequence belongs to the class-II aminoacyl-tRNA synthetase family. Type 1 subfamily. In terms of assembly, homodimer.

It is found in the cytoplasm. It catalyses the reaction tRNA(Asx) + L-aspartate + ATP = L-aspartyl-tRNA(Asx) + AMP + diphosphate. In terms of biological role, aspartyl-tRNA synthetase with relaxed tRNA specificity since it is able to aspartylate not only its cognate tRNA(Asp) but also tRNA(Asn). Reaction proceeds in two steps: L-aspartate is first activated by ATP to form Asp-AMP and then transferred to the acceptor end of tRNA(Asp/Asn). This Bartonella quintana (strain Toulouse) (Rochalimaea quintana) protein is Aspartate--tRNA(Asp/Asn) ligase.